A 1153-amino-acid polypeptide reads, in one-letter code: Protein unc-13 homolog 4B (1153 aa).

The tract at residues 54-84 is disordered; sequence VLKSSLAPLEENGSGGEEDSDESPDGTLQLS. Residues 162 to 288 enclose the C2 1 domain; sequence ATHEEIYEAA…MKEIAVTASS (127 aa). Ca(2+)-binding residues include D195, D201, D252, F253, and D254. The MHD1 domain occupies 637–755; it reads FEVYLILKRY…RCCIFYAQQM (119 aa). The 107-residue stretch at 869 to 975 folds into the MHD2 domain; sequence SNSMDQLMMY…LETSDLIHQY (107 aa). Positions 990 to 1114 constitute a C2 2 domain; it reads PYGQLTITAQ…EATPPGEQIM (125 aa). Ca(2+) is bound by residues D1019, D1025, D1083, and D1085.

It belongs to the unc-13 family. In terms of assembly, interacts with Cam. The cofactor is Ca(2+).

The protein resides in the cytoplasm. It localises to the cytoskeleton. The protein localises to the cell projection. Its subcellular location is the filopodium. It is found in the late endosome. The protein resides in the lysosome. Essential for tracheal development in embryos. Functions with the GTPase Rab39 and downstream of dnd, to regulate lumen fusion between previously separate tracheal branches (anastomosis). Essential component of secretory lysosome-related organelles (SLs) that are present in the tracheal fusion tip cells (FCs). Mediates intracellular fusion of the extending tracheal stalk cell lumen in the FCs by recruiting the SNARE complex component Syx1A to the SLs, this may then enable the SLs to interact with complementary SNAREs (such as Syb) present in the apical membrane of the FC-FC interface and the membranes of the separate tracheal stalk cells. May also function in the maturation and exocytosis of the SLs. In Drosophila melanogaster (Fruit fly), this protein is Protein unc-13 homolog 4B.